A 119-amino-acid chain; its full sequence is Flagellar transcriptional regulator FlhD (119 aa).

It belongs to the FlhD family. In terms of assembly, homodimer; disulfide-linked. Forms a heterohexamer composed of two FlhC and four FlhD subunits. Each FlhC binds a FlhD dimer, forming a heterotrimer, and a hexamer assembles by dimerization of two heterotrimers.

It localises to the cytoplasm. In terms of biological role, functions in complex with FlhC as a master transcriptional regulator that regulates transcription of several flagellar and non-flagellar operons by binding to their promoter region. Activates expression of class 2 flagellar genes, including fliA, which is a flagellum-specific sigma factor that turns on the class 3 genes. Also regulates genes whose products function in a variety of physiological pathways. This chain is Flagellar transcriptional regulator FlhD, found in Yersinia enterocolitica.